Reading from the N-terminus, the 469-residue chain is Beta-1,3-xylanase (469 aa).

A signal peptide spans M1–A22. One can recognise a GH26 domain in the interval L23–D293. The Proton donor role is filled by E138. The active-site Nucleophile is E234. Residues D352 to G374 show a composition bias toward gly residues. Residues D352–E380 form a disordered region. A carbohydrate binding module (CBM) region spans residues E377 to N469. 2 disulfide bridges follow: C382–C468 and C413–C418.

It belongs to the glycosyl hydrolase 26 family.

The catalysed reaction is Random hydrolysis of (1-&gt;3)-beta-D-glycosidic linkages in (1-&gt;3)-beta-D-xylans.. Completely inhibited by CuCl(2), FeCl(3), HgCl(2) and N-bromosuccinimide. Moderately inhibited by AgCl, AlCl(3), Pb(CH(3)COO)(2) and dithiothreitol. BaCl(2), CaCl(2), KCl, MgCl(2), MnCl(2), NaCl, ZnCl(2), ethylenediaminetetraacetic acid, N-ethylmaleimide, iodoacetic acid and p-chloromercuribenzoic acid have little or no effect on activity. Functionally, catalyzes the hydrolysis of beta-1,3-xylan into oligosaccharides, mainly xylotriose and xylobiose with smaller amounts of xylotetraose, xylose, xylopentaose and xylohexaose. Does not hydrolyze xylobiose, p-nitrophenyl-beta-xyloside, beta-1,4-xylan, carboxymethylcellulose, curdlan, glucomannan or beta-1,4-mannan. The chain is Beta-1,3-xylanase from Alcaligenes sp.